A 157-amino-acid chain; its full sequence is Ribonuclease 8 (157 aa).

The N-terminal stretch at 1 to 30 is a signal peptide; it reads MAPARAGCCPLLLLLLLLLGLWVAEVLVSA. Histidine 45 serves as the catalytic Proton acceptor. 4 cysteine pairs are disulfide-bonded: cysteine 53-cysteine 96, cysteine 67-cysteine 121, cysteine 85-cysteine 136, and cysteine 92-cysteine 99. Residues 68–72 and lysine 93 contribute to the substrate site; that span reads KDLNT. Histidine 152 serves as the catalytic Proton donor.

It belongs to the pancreatic ribonuclease family.

Its subcellular location is the secreted. Functionally, has a low ribonuclease activity. This Pan troglodytes (Chimpanzee) protein is Ribonuclease 8 (RNASE8).